Reading from the N-terminus, the 349-residue chain is NADH-quinone oxidoreductase subunit H (349 aa).

The next 8 membrane-spanning stretches (helical) occupy residues 20–42, 88–108, 123–143, 167–187, 202–222, 249–269, 284–304, and 325–345; these read WTLIKIVLIVAPMMLGVAYLTYF, GIFIIAPMLAIAPALAAWAVV, LLYIMAITSMGVYGIILSGWA, MGFSLICVLMVSNSLNLVEIV, FLSWNWLPLFPMFLVYLISGV, GMAFAVFFLAEYANMILVSAL, FLPDGILWLFAKMSAILFLFL, and VFVPICLIWLVVVGVWMMSPL.

This sequence belongs to the complex I subunit 1 family. As to quaternary structure, NDH-1 is composed of 14 different subunits. Subunits NuoA, H, J, K, L, M, N constitute the membrane sector of the complex.

It is found in the cell inner membrane. It catalyses the reaction a quinone + NADH + 5 H(+)(in) = a quinol + NAD(+) + 4 H(+)(out). NDH-1 shuttles electrons from NADH, via FMN and iron-sulfur (Fe-S) centers, to quinones in the respiratory chain. The immediate electron acceptor for the enzyme in this species is believed to be ubiquinone. Couples the redox reaction to proton translocation (for every two electrons transferred, four hydrogen ions are translocated across the cytoplasmic membrane), and thus conserves the redox energy in a proton gradient. This subunit may bind ubiquinone. This chain is NADH-quinone oxidoreductase subunit H, found in Dechloromonas aromatica (strain RCB).